We begin with the raw amino-acid sequence, 135 residues long: Large ribosomal subunit protein uL16c (135 aa).

It belongs to the universal ribosomal protein uL16 family. Part of the 50S ribosomal subunit.

Its subcellular location is the plastid. The protein resides in the chloroplast. This chain is Large ribosomal subunit protein uL16c, found in Populus alba (White poplar).